The sequence spans 416 residues: Phakinin (416 aa).

Residues M1–V48 are disordered. S2 is modified (N-acetylserine). Residues S2–C115 form a head region. S27, S33, S36, and S91 each carry phosphoserine. Polar residues predominate over residues L28 to V48. One can recognise an IF rod domain in the interval D105–N416. Coiled coils occupy residues L116–K146, L170–L249, and Q308–D402. Residues S397–N416 are tail.

Belongs to the intermediate filament family. Part of a complex required for lens intermediate filament formation composed of BFSP1, BFSP2 and CRYAA. Found in a complex composed of PPL (via C-terminal linker domain), BFSP1 and BFSP2 in the retinal lens. Within the complex interacts with PPL (via C-terminal linker domain) and with BFSP1. Identified in a complex that contains VIM, EZR, AHNAK, BFSP1, BFSP2, ANK2, PLEC, PRX and spectrin. Interacts with LGSN. Interacts with VIM. As to expression, detected in retina lens fiber cells (at protein level). Also expressed in the lens epithelium, abundantly expressed in the anterior and anterolateral epithelium, less frequently expressed nearer the lens coronal equator (at protein level).

The protein resides in the cell membrane. The protein localises to the cytoplasm. It is found in the cytoskeleton. It localises to the cell cortex. Required for the correct formation of lens intermediate filaments as part of a complex composed of BFSP1, BFSP2 and CRYAA. Plays a role in maintenance of retinal lens optical clarity. This chain is Phakinin (Bfsp2), found in Mus musculus (Mouse).